Consider the following 297-residue polypeptide: Internalin C (297 aa).

A signal peptide spans 1 to 34 (MLKKNNWLQNAVIAMLVLIVGLCINMGSGTKVQA). LRR repeat units lie at residues 74-96 (LSGV…MQFF), 97-120 (TNLK…DLTK), 122-139 (EELS…GIPS), 140-161 (ACLS…LIHL), 162-184 (KNLE…GFLS), and 186-207 (LEVL…RLKK).

It belongs to the internalin family. Interacts in vitro with human intestinal mucin-2 (MUC2) but not with mucin-1; binding is slightly better at pH 5.5, (the pH of the intestine) than at pH 7.4. Interacts with the SH3 6 domain of human DNMBP (Tuba). Interacts with I-kappa-B kinase alpha (IKKA, CHUK).

Its subcellular location is the secreted. The protein resides in the host cytoplasm. Functionally, a virulence enhancer that has at least 2 dissociable functions in infection; it impairs translocation of host transcription factor NF-kappa-B to the nucleus and antagonizes the function of the Tuba dynamin-binding protein, promoting bacterial spreading. Perturbs the morphology of host cell junctions by impairing host DNMBP (Tuba) and WASL interaction, altering cortical tension at the cell junctions and allowing bacteria to more efficiently form bacteria-filled cell protrusions which promote bacterial spreading within infected host tissue. Down-regulates the host inflammation response usually induced by Listeria infection. Interacts with host I-kappa-B kinase alpha (IKKA, CHUK), which prevents IKKA from phosphorylating NF-kappa-B inhibitor alpha (IKBA, NFKBIA) and thus delays degradation of phospho-IKBA. Translocation of host transcription factor p65 (a subunit of NF-kappa-B, RELA) into the nucleus is impaired, which prevents activation of NF-KB-regulated genes. Recognized by serum from healthy humans exposed to L.monocytogenes as well from patients who have recovered from listeriosis. This is Internalin C from Listeria monocytogenes serotype 1/2a (strain EGD / Mackaness).